A 642-amino-acid chain; its full sequence is Chaperone protein HtpG (642 aa).

The tract at residues 1-348 is a; substrate-binding; the sequence is MSTKIEQLEF…AQDLSLNVSR (348 aa). A b region spans residues 349 to 564; that stretch reads EILQQDRQIR…AFSMSPALER (216 aa). The segment at 565–642 is c; it reads MYRASGQPVP…MLANRLARTV (78 aa).

The protein belongs to the heat shock protein 90 family. In terms of assembly, homodimer.

It localises to the cytoplasm. In terms of biological role, molecular chaperone. Has ATPase activity. The protein is Chaperone protein HtpG of Rhodococcus jostii (strain RHA1).